A 422-amino-acid chain; its full sequence is UDP-N-acetylglucosamine 1-carboxyvinyltransferase (422 aa).

22 to 23 (KN) contacts phosphoenolpyruvate. Residue Arg93 participates in UDP-N-acetyl-alpha-D-glucosamine binding. Cys117 acts as the Proton donor in catalysis. Cys117 is modified (2-(S-cysteinyl)pyruvic acid O-phosphothioketal). Residues 122-126 (RPVDL), 162-165 (KVSV), Asp307, and Ile329 each bind UDP-N-acetyl-alpha-D-glucosamine.

This sequence belongs to the EPSP synthase family. MurA subfamily.

The protein localises to the cytoplasm. The enzyme catalyses phosphoenolpyruvate + UDP-N-acetyl-alpha-D-glucosamine = UDP-N-acetyl-3-O-(1-carboxyvinyl)-alpha-D-glucosamine + phosphate. The protein operates within cell wall biogenesis; peptidoglycan biosynthesis. Functionally, cell wall formation. Adds enolpyruvyl to UDP-N-acetylglucosamine. This is UDP-N-acetylglucosamine 1-carboxyvinyltransferase from Hamiltonella defensa subsp. Acyrthosiphon pisum (strain 5AT).